The sequence spans 125 residues: UPF0231 protein in hemN 3'region (125 aa).

This sequence belongs to the UPF0231 family.

This is UPF0231 protein in hemN 3'region from Mannheimia haemolytica (Pasteurella haemolytica).